The sequence spans 148 residues: Cystatin-C (148 aa).

The N-terminal stretch at 1-30 (MVGSPRAPLLLLASLIVALALALAVSPAAA) is a signal peptide. Gln-31 bears the Pyrrolidone carboxylic acid mark. The Secondary area of contact motif lies at 84 to 88 (QVVSG). 2 cysteine pairs are disulfide-bonded: Cys-102-Cys-112 and Cys-126-Cys-146.

The protein resides in the secreted. In terms of biological role, this is a thiol proteinase inhibitor. The protein is Cystatin-C (CST3) of Bos taurus (Bovine).